The following is a 503-amino-acid chain: Maturase K (503 aa).

The protein belongs to the intron maturase 2 family. MatK subfamily.

Its subcellular location is the plastid. It localises to the chloroplast. In terms of biological role, usually encoded in the trnK tRNA gene intron. Probably assists in splicing its own and other chloroplast group II introns. The protein is Maturase K of Silene latifolia (White campion).